Consider the following 337-residue polypeptide: Putative olfactory receptor 1F12P (337 aa).

Residues M1–V25 lie on the Extracellular side of the membrane. N-linked (GlcNAc...) asparagine glycans are attached at residues N5 and N8. A helical membrane pass occupies residues L26 to I49. Residues G50–T57 are Cytoplasmic-facing. A helical transmembrane segment spans residues P58–P79. Residues K80 to Q100 lie on the Extracellular side of the membrane. Cysteines 97 and 189 form a disulfide. A helical membrane pass occupies residues M101 to Y120. Residues D121–R139 lie on the Cytoplasmic side of the membrane. Residues L140–L158 form a helical membrane-spanning segment. Topologically, residues H159–Q196 are extracellular. Residues L197–I219 traverse the membrane as a helical segment. The Cytoplasmic segment spans residues L220–K236. The helical transmembrane segment at A237–Y259 threads the bilayer. The Extracellular segment spans residues M260 to S272. N265 is a glycosylation site (N-linked (GlcNAc...) asparagine). The helical transmembrane segment at A273–L292 threads the bilayer. Topologically, residues R293–G337 are cytoplasmic.

Belongs to the G-protein coupled receptor 1 family.

The protein resides in the cell membrane. Odorant receptor. The chain is Putative olfactory receptor 1F12P from Homo sapiens (Human).